A 64-amino-acid chain; its full sequence is Large ribosomal subunit protein uL29 (64 aa).

The protein belongs to the universal ribosomal protein uL29 family.

This chain is Large ribosomal subunit protein uL29, found in Solidesulfovibrio magneticus (strain ATCC 700980 / DSM 13731 / RS-1) (Desulfovibrio magneticus).